The primary structure comprises 297 residues: Protease HtpX homolog (297 aa).

A run of 2 helical transmembrane segments spans residues 14–34 and 38–58; these read IVLLFVFFILVALVGAAVGYL and SLETGVVAAIVIGAIYTIIMV. His-144 serves as a coordination point for Zn(2+). The active site involves Glu-145. His-148 contributes to the Zn(2+) binding site. The next 2 helical transmembrane spans lie at 159–179 and 199–219; these read IALALAAAITLLTNIGGNWWF and ILLLVFSILMMVLAPLAAAAI. Glu-228 lines the Zn(2+) pocket.

It belongs to the peptidase M48B family. Zn(2+) is required as a cofactor.

The protein localises to the cell membrane. The polypeptide is Protease HtpX homolog (Leuconostoc mesenteroides subsp. mesenteroides (strain ATCC 8293 / DSM 20343 / BCRC 11652 / CCM 1803 / JCM 6124 / NCDO 523 / NBRC 100496 / NCIMB 8023 / NCTC 12954 / NRRL B-1118 / 37Y)).